The sequence spans 517 residues: Nectin-1 (517 aa).

Positions 1 to 30 are cleaved as a signal peptide; the sequence is MARMGLAGAAGRWWGLALGLTAFFLPGVHS. Residues 31–141 form the Ig-like V-type domain; the sequence is QVVQVNDSMY…GNRESQLNLT (111 aa). The Extracellular portion of the chain corresponds to 31–355; sequence QVVQVNDSMY…GRRAGPVPTA (325 aa). 3 N-linked (GlcNAc...) asparagine glycosylation sites follow: Asn36, Asn72, and Asn139. A disulfide bond links Cys51 and Cys124. Ig-like C2-type domains follow at residues 149 to 238 and 247 to 334; these read WIEG…FKES and PEVT…VNIT. Disulfide bonds link Cys172–Cys226 and Cys269–Cys316. An N-linked (GlcNAc...) (complex) asparagine glycan is attached at Asn202. The interval 282-299 is interaction with FGFR; the sequence is WTTLNGSLPKGVEAQNRT. N-linked (GlcNAc...) asparagine glycosylation is found at Asn286, Asn297, Asn307, and Asn332. The helical transmembrane segment at 356 to 376 threads the bilayer; that stretch reads IIGGVAGSILLVLIVVGGIVV. Over 377–517 the chain is Cytoplasmic; the sequence is ALRRRRHTFK…SFISKKEWYV (141 aa). Positions 399–488 are disordered; it reads GYSKAGIPQH…DGYGDRTLGY (90 aa). 3 positions are modified to phosphoserine: Ser422, Ser434, and Ser435. Tyr436 is subject to Phosphotyrosine. Residues 436–445 are compositionally biased toward acidic residues; sequence YEEEEEEEEG. The segment covering 449 to 466 has biased composition (basic and acidic residues); that stretch reads GERKVGGPHPKYDEDAKR. The residue at position 511 (Ser511) is a Phosphoserine.

The protein belongs to the nectin family. In terms of assembly, cis- and trans-homodimer. Can form trans-heterodimers with NECTIN3 and with NECTIN4. Interaction between NECTIN1 and NECTIN3 on the pre- and postsynaptic sites, respectively, initiates the formation of puncta adherentia junctions between axons and dendrites. Interacts (via cytoplasmic domain) with AFDN (via PDZ domain); this interaction recruits NECTIN1 to cadherin-based adherens junctions and provides a connection with the actin cytoskeleton. Interacts with integrin alphaV/beta3. Interacts (via Ig-like C2-type domain 2) with FGFR1, FGFR2 and FGFR3. As to quaternary structure, (Microbial infection) Interacts with herpes simplex virus 1/HHV-1, herpes simplex virus 2/HHV-2, and pseudorabies virus/PRV envelope glycoprotein D. In terms of processing, (Microbial infection) Ubiquitinated by CBL following infection by herpes simplex virus 1/HHV-1 and association with HHV-1 envelope glycoprotein D, leading to its removal from cell surface.

It localises to the cell membrane. The protein localises to the cell junction. The protein resides in the adherens junction. Its subcellular location is the presynaptic cell membrane. It is found in the secreted. Functionally, cell adhesion molecule that promotes cell-cell contacts and plays important roles in the development of the nervous system. Acts by forming homophilic or heterophilic trans-dimers. Heterophilic interactions have been detected between NECTIN1 and NECTIN3 and between NECTIN1 and NECTIN4. Involved in axon guidance by promoting contacts between the commissural axons and the floor plate cells. Involved in synaptogegesis. Has some neurite outgrowth-promoting activity. Promotes formation of checkerboard-like cellular pattern of hair cells and supporting cells in the auditory epithelium via heterophilic interaction with NECTIN3: NECTIN1 is present in the membrane of hair cells and associates with NECTIN3 on supporting cells, thereby mediating heterotypic adhesion between these two cell types. Required for enamel mineralization. (Microbial infection) Acts as a receptor for herpes simplex virus 1/HHV-1, herpes simplex virus 2/HHV-2, and pseudorabies virus/PRV. Constitutes the major receptor for herpes simplex virus 1/HHV-1 entry into host cells. In Homo sapiens (Human), this protein is Nectin-1.